Here is an 817-residue protein sequence, read N- to C-terminus: Anaphase-promoting complex subunit 4 (817 aa).

The residue at position 469 (tyrosine 469) is a Phosphotyrosine. 2 positions are modified to phosphoserine: serine 757 and serine 758. Lysine 772 is covalently cross-linked (Glycyl lysine isopeptide (Lys-Gly) (interchain with G-Cter in SUMO2)). Serine 777 and serine 779 each carry phosphoserine. A Glycyl lysine isopeptide (Lys-Gly) (interchain with G-Cter in SUMO2) cross-link involves residue lysine 798.

It belongs to the APC4 family. The mammalian APC/C is composed at least of 14 distinct subunits ANAPC1, ANAPC2, CDC27/APC3, ANAPC4, ANAPC5, CDC16/APC6, ANAPC7, CDC23/APC8, ANAPC10, ANAPC11, CDC26/APC12, ANAPC13, ANAPC15 and ANAPC16 that assemble into a complex of at least 19 chains with a combined molecular mass of around 1.2 MDa; APC/C interacts with FZR1 and FBXO5. In the context of the APC/C complex, directly interacts with UBE2S.

The protein localises to the nucleus. Its pathway is protein modification; protein ubiquitination. Functionally, component of the anaphase promoting complex/cyclosome (APC/C), a cell cycle-regulated E3 ubiquitin ligase that controls progression through mitosis and the G1 phase of the cell cycle. The APC/C complex acts by mediating ubiquitination and subsequent degradation of target proteins: it mainly mediates the formation of 'Lys-11'-linked polyubiquitin chains and, to a lower extent, the formation of 'Lys-48'- and 'Lys-63'-linked polyubiquitin chains. The APC/C complex catalyzes assembly of branched 'Lys-11'-/'Lys-48'-linked branched ubiquitin chains on target proteins. The polypeptide is Anaphase-promoting complex subunit 4 (ANAPC4) (Pongo abelii (Sumatran orangutan)).